The following is a 344-amino-acid chain: MGATRARIAVDAMGGDHAPDQIVAGALRAREELEVEVLLVGDPDQIHSAVKHHNNSSAIEIVPAEGVIEMHEEPLSGIKRKPRASINVAMNLVKEKQADAVVSAGHSGAAMAAALLRLGRLPGIDRPAIGAVLPTLIPGKAVLILDVGANVDCRPKFLEQFALMGTIYSQYVLGVEKPQVGLLNIGEEECKGNDLALRTYEILKENTQIPFVGNAEGRDVLSGQFDVIVCDGFVGNVLLKFAEAVGEVALQILREELPRGLHGQVGTALLKPNLRRIKQRMDHAEHGGGLLLGVNGVCIISHGSSQAPSIFNAIRLAKEAVDHQVSDRIQASCRLTANPVVDGN.

This sequence belongs to the PlsX family. As to quaternary structure, homodimer. Probably interacts with PlsY.

Its subcellular location is the cytoplasm. The enzyme catalyses a fatty acyl-[ACP] + phosphate = an acyl phosphate + holo-[ACP]. It participates in lipid metabolism; phospholipid metabolism. Its function is as follows. Catalyzes the reversible formation of acyl-phosphate (acyl-PO(4)) from acyl-[acyl-carrier-protein] (acyl-ACP). This enzyme utilizes acyl-ACP as fatty acyl donor, but not acyl-CoA. The protein is Phosphate acyltransferase of Cyanothece sp. (strain PCC 7425 / ATCC 29141).